The following is a 487-amino-acid chain: Protein nucleotidyltransferase YdiU (487 aa).

Positions 92, 95, 106, 118, 119, 169, and 176 each coordinate ATP. The active-site Proton acceptor is aspartate 253. Residues asparagine 254 and aspartate 263 each coordinate Mg(2+). Aspartate 263 lines the ATP pocket.

It belongs to the SELO family. The cofactor is Mg(2+). Mn(2+) serves as cofactor.

It catalyses the reaction L-seryl-[protein] + ATP = 3-O-(5'-adenylyl)-L-seryl-[protein] + diphosphate. The catalysed reaction is L-threonyl-[protein] + ATP = 3-O-(5'-adenylyl)-L-threonyl-[protein] + diphosphate. It carries out the reaction L-tyrosyl-[protein] + ATP = O-(5'-adenylyl)-L-tyrosyl-[protein] + diphosphate. The enzyme catalyses L-histidyl-[protein] + UTP = N(tele)-(5'-uridylyl)-L-histidyl-[protein] + diphosphate. It catalyses the reaction L-seryl-[protein] + UTP = O-(5'-uridylyl)-L-seryl-[protein] + diphosphate. The catalysed reaction is L-tyrosyl-[protein] + UTP = O-(5'-uridylyl)-L-tyrosyl-[protein] + diphosphate. Its function is as follows. Nucleotidyltransferase involved in the post-translational modification of proteins. It can catalyze the addition of adenosine monophosphate (AMP) or uridine monophosphate (UMP) to a protein, resulting in modifications known as AMPylation and UMPylation. The protein is Protein nucleotidyltransferase YdiU of Bordetella pertussis (strain Tohama I / ATCC BAA-589 / NCTC 13251).